Reading from the N-terminus, the 189-residue chain is Peptidyl-tRNA hydrolase (189 aa).

Y15 provides a ligand contact to tRNA. H20 (proton acceptor) is an active-site residue. The tRNA site is built by F66, N68, and N114.

Belongs to the PTH family. Monomer.

The protein resides in the cytoplasm. The enzyme catalyses an N-acyl-L-alpha-aminoacyl-tRNA + H2O = an N-acyl-L-amino acid + a tRNA + H(+). In terms of biological role, hydrolyzes ribosome-free peptidyl-tRNAs (with 1 or more amino acids incorporated), which drop off the ribosome during protein synthesis, or as a result of ribosome stalling. Its function is as follows. Catalyzes the release of premature peptidyl moieties from peptidyl-tRNA molecules trapped in stalled 50S ribosomal subunits, and thus maintains levels of free tRNAs and 50S ribosomes. This is Peptidyl-tRNA hydrolase from Streptococcus pneumoniae (strain JJA).